We begin with the raw amino-acid sequence, 280 residues long: Ribosomal RNA small subunit methyltransferase A (280 aa).

S-adenosyl-L-methionine is bound by residues Asn28, Leu30, Gly55, Glu77, Asp103, and Asn122.

It belongs to the class I-like SAM-binding methyltransferase superfamily. rRNA adenine N(6)-methyltransferase family. RsmA subfamily.

It localises to the cytoplasm. The enzyme catalyses adenosine(1518)/adenosine(1519) in 16S rRNA + 4 S-adenosyl-L-methionine = N(6)-dimethyladenosine(1518)/N(6)-dimethyladenosine(1519) in 16S rRNA + 4 S-adenosyl-L-homocysteine + 4 H(+). Its function is as follows. Specifically dimethylates two adjacent adenosines (A1518 and A1519) in the loop of a conserved hairpin near the 3'-end of 16S rRNA in the 30S particle. May play a critical role in biogenesis of 30S subunits. The polypeptide is Ribosomal RNA small subunit methyltransferase A (Roseobacter denitrificans (strain ATCC 33942 / OCh 114) (Erythrobacter sp. (strain OCh 114))).